Here is a 117-residue protein sequence, read N- to C-terminus: UPF0102 protein Ssed_4252 (117 aa).

It belongs to the UPF0102 family.

This is UPF0102 protein Ssed_4252 from Shewanella sediminis (strain HAW-EB3).